Here is a 283-residue protein sequence, read N- to C-terminus: Bifunctional protein FolD (283 aa).

NADP(+)-binding positions include 163 to 165 (GRS), Ser-188, and Ile-229.

It belongs to the tetrahydrofolate dehydrogenase/cyclohydrolase family. Homodimer.

The catalysed reaction is (6R)-5,10-methylene-5,6,7,8-tetrahydrofolate + NADP(+) = (6R)-5,10-methenyltetrahydrofolate + NADPH. The enzyme catalyses (6R)-5,10-methenyltetrahydrofolate + H2O = (6R)-10-formyltetrahydrofolate + H(+). Its pathway is one-carbon metabolism; tetrahydrofolate interconversion. Its function is as follows. Catalyzes the oxidation of 5,10-methylenetetrahydrofolate to 5,10-methenyltetrahydrofolate and then the hydrolysis of 5,10-methenyltetrahydrofolate to 10-formyltetrahydrofolate. This Campylobacter concisus (strain 13826) protein is Bifunctional protein FolD.